We begin with the raw amino-acid sequence, 165 residues long: MDIAHDLQSIGAQEQALVFPHFDPARAWALGNRMHALATSRGHAIAIDIVTFGQPLFYAALAGATPDNADWVRRKRNVVAHFRRSSYAIGLRMQQAGATLADKHGLPVAEYASHGGSFPLTVAGAGVIGSITASGLPQRADHEFVVEALCAELGHDYAVLALARS.

It belongs to the UPF0303 family.

The chain is UPF0303 protein Bcenmc03_1534 from Burkholderia orbicola (strain MC0-3).